Here is a 430-residue protein sequence, read N- to C-terminus: Adenylosuccinate synthetase (430 aa).

GTP-binding positions include 13 to 19 (GDEGKGK) and 41 to 43 (GHT). Asp14 serves as the catalytic Proton acceptor. Residues Asp14 and Gly41 each coordinate Mg(2+). Residues 14 to 17 (DEGK), 39 to 42 (NAGH), Thr130, Arg144, Gln225, Thr240, and Arg304 each bind IMP. The active-site Proton donor is the His42. 300-306 (ASTGRPR) contacts substrate. Residues Arg306, 332–334 (KLD), and 414–416 (STG) each bind GTP.

Belongs to the adenylosuccinate synthetase family. In terms of assembly, homodimer. The cofactor is Mg(2+).

The protein localises to the cytoplasm. It catalyses the reaction IMP + L-aspartate + GTP = N(6)-(1,2-dicarboxyethyl)-AMP + GDP + phosphate + 2 H(+). Its pathway is purine metabolism; AMP biosynthesis via de novo pathway; AMP from IMP: step 1/2. Plays an important role in the de novo pathway of purine nucleotide biosynthesis. Catalyzes the first committed step in the biosynthesis of AMP from IMP. In Xylella fastidiosa (strain M23), this protein is Adenylosuccinate synthetase.